A 150-amino-acid polypeptide reads, in one-letter code: Large ribosomal subunit protein bL9 (150 aa).

It belongs to the bacterial ribosomal protein bL9 family.

Functionally, binds to the 23S rRNA. The chain is Large ribosomal subunit protein bL9 from Alteromonas mediterranea (strain DSM 17117 / CIP 110805 / LMG 28347 / Deep ecotype).